Here is a 102-residue protein sequence, read N- to C-terminus: NADH-quinone oxidoreductase subunit K (102 aa).

The next 3 helical transmembrane spans lie at 6–26 (MEHG…GLLI), 30–50 (LLYI…AFVV), and 65–85 (ILVI…LLLL).

This sequence belongs to the complex I subunit 4L family. In terms of assembly, NDH-1 is composed of 13 different subunits. Subunits NuoA, H, J, K, L, M, N constitute the membrane sector of the complex.

It localises to the cell inner membrane. It catalyses the reaction a quinone + NADH + 5 H(+)(in) = a quinol + NAD(+) + 4 H(+)(out). Its function is as follows. NDH-1 shuttles electrons from NADH, via FMN and iron-sulfur (Fe-S) centers, to quinones in the respiratory chain. The immediate electron acceptor for the enzyme in this species is believed to be ubiquinone. Couples the redox reaction to proton translocation (for every two electrons transferred, four hydrogen ions are translocated across the cytoplasmic membrane), and thus conserves the redox energy in a proton gradient. This chain is NADH-quinone oxidoreductase subunit K, found in Shewanella oneidensis (strain ATCC 700550 / JCM 31522 / CIP 106686 / LMG 19005 / NCIMB 14063 / MR-1).